The chain runs to 134 residues: Large ribosomal subunit protein uL16c (134 aa).

Belongs to the universal ribosomal protein uL16 family. As to quaternary structure, part of the 50S ribosomal subunit.

The protein localises to the plastid. Its subcellular location is the chloroplast. The chain is Large ribosomal subunit protein uL16c from Oltmannsiellopsis viridis (Marine flagellate).